Reading from the N-terminus, the 140-residue chain is ATP synthase epsilon chain (140 aa).

This sequence belongs to the ATPase epsilon chain family. F-type ATPases have 2 components, CF(1) - the catalytic core - and CF(0) - the membrane proton channel. CF(1) has five subunits: alpha(3), beta(3), gamma(1), delta(1), epsilon(1). CF(0) has three main subunits: a, b and c.

The protein localises to the cell inner membrane. Its function is as follows. Produces ATP from ADP in the presence of a proton gradient across the membrane. The protein is ATP synthase epsilon chain of Legionella pneumophila (strain Lens).